Here is a 350-residue protein sequence, read N- to C-terminus: Galactokinase (350 aa).

14–17 (EHTD) serves as a coordination point for substrate. Residues Ser46 and 96–102 (GAGLSSS) each bind ATP. Residues Ser102 and Glu134 each contribute to the Mg(2+) site. Asp146 serves as the catalytic Proton acceptor. Residue Tyr196 participates in substrate binding.

It belongs to the GHMP kinase family. GalK subfamily.

It localises to the cytoplasm. It catalyses the reaction alpha-D-galactose + ATP = alpha-D-galactose 1-phosphate + ADP + H(+). The protein operates within carbohydrate metabolism; galactose metabolism. Its function is as follows. Catalyzes the transfer of the gamma-phosphate of ATP to D-galactose to form alpha-D-galactose-1-phosphate (Gal-1-P). This chain is Galactokinase, found in Thermotoga maritima (strain ATCC 43589 / DSM 3109 / JCM 10099 / NBRC 100826 / MSB8).